The chain runs to 615 residues: Medium-chain acyl-CoA ligase ACSF2, mitochondrial (615 aa).

Residues 1-41 (MAVYVGMLRLGRLCAGSSGVLGARAALSRSWQEARLQGVRF) constitute a mitochondrion transit peptide. Lysine 179 carries the N6-acetyllysine modification. Lysine 182 is modified (N6-acetyllysine; alternate). An N6-succinyllysine; alternate modification is found at lysine 182. Residue 263–271 (TSGTTGSPK) participates in ATP binding. N6-acetyllysine occurs at positions 340 and 398. N6-succinyllysine is present on lysine 478. Aspartate 493 and arginine 508 together coordinate ATP. N6-acetyllysine is present on lysine 510. An N6-acetyllysine; alternate mark is found at lysine 544 and lysine 570. Residues lysine 544 and lysine 570 each carry the N6-succinyllysine; alternate modification. Position 599 (lysine 599) interacts with ATP. Position 599 is an N6-succinyllysine (lysine 599).

Belongs to the ATP-dependent AMP-binding enzyme family.

Its subcellular location is the mitochondrion. The enzyme catalyses a medium-chain fatty acid + ATP + CoA = a medium-chain fatty acyl-CoA + AMP + diphosphate. It carries out the reaction octanoate + ATP + CoA = octanoyl-CoA + AMP + diphosphate. Its function is as follows. Acyl-CoA synthases catalyze the initial reaction in fatty acid metabolism, by forming a thioester with CoA. Has some preference toward medium-chain substrates. Plays a role in adipocyte differentiation. The chain is Medium-chain acyl-CoA ligase ACSF2, mitochondrial from Homo sapiens (Human).